Consider the following 1123-residue polypeptide: Translation initiation factor IF-2 (1123 aa).

2 disordered regions span residues 52 to 452 (LLKA…KVHI) and 480 to 512 (LARP…RQRQ). Low complexity-rich tracts occupy residues 54–73 (KAGS…PGKA), 94–113 (KPAA…AKSP), and 121–133 (AAPS…KASA). Residues 170–187 (PPSPPARPVPQQPSPPSA) show a composition bias toward pro residues. Residues 193–206 (APIRRAAPNDAPRP) show a composition bias toward low complexity. 2 stretches are compositionally biased toward pro residues: residues 207–217 (ANAPPSRPQPK) and 258–268 (SPRPAVSPRPS). The span at 285-304 (RPGAPTRPGTGAGRPSRPGG) shows a compositional bias: low complexity. Over residues 320 to 339 (GNRGEGGRPPGGARPAGGGN) the composition is skewed to gly residues. Pro residues predominate over residues 388 to 403 (ATPPVSRPTATPPSPA). Positions 412 to 422 (FRPGAGPGGQR) are enriched in gly residues. Positions 425-439 (GRPDWDDSAKLDALR) are enriched in basic and acidic residues. A compositionally biased stretch (low complexity) spans 486–499 (PKSQQKAAPKPVAA). The span at 500–512 (MRKRRKETTRQRQ) shows a compositional bias: basic residues. The 173-residue stretch at 615 to 787 (RRPPVVTVMG…LLLVTEVEDL (173 aa)) folds into the tr-type G domain. The segment at 624-631 (GHVDHGKT) is G1. 624–631 (GHVDHGKT) serves as a coordination point for GTP. The G2 stretch occupies residues 649 to 653 (GITQH). The tract at residues 674–677 (DTPG) is G3. GTP contacts are provided by residues 674–678 (DTPGH) and 728–731 (NKID). The G4 stretch occupies residues 728–731 (NKID). The segment at 764–766 (SAI) is G5.

It belongs to the TRAFAC class translation factor GTPase superfamily. Classic translation factor GTPase family. IF-2 subfamily.

It is found in the cytoplasm. In terms of biological role, one of the essential components for the initiation of protein synthesis. Protects formylmethionyl-tRNA from spontaneous hydrolysis and promotes its binding to the 30S ribosomal subunits. Also involved in the hydrolysis of GTP during the formation of the 70S ribosomal complex. The polypeptide is Translation initiation factor IF-2 (Synechococcus sp. (strain WH7803)).